A 429-amino-acid polypeptide reads, in one-letter code: Keratin, type I cytoskeletal 47 kDa (429 aa).

Residues 1-16 are compositionally biased toward low complexity; it reads MTSYRSSSASYYSGSS. Positions 1-20 are disordered; sequence MTSYRSSSASYYSGSSSKGG. The tract at residues 1-69 is head; the sequence is MTSYRSSSAS…EAASSSFGGN (69 aa). The segment at 70-105 is coil 1A; that stretch reads EKHAMQNLNDRLASYLEKVRALEATNSDLEGKIRNW. Residues 70–385 form the IF rod domain; the sequence is EKHAMQNLND…RLLEGELGQV (316 aa). The tract at residues 106–127 is linker 1; sequence YDKQSDAGIGAGSKDYSKYFEI. Residues 128 to 219 are coil 1B; the sequence is IAELRNKIRA…KNHEEEMSHA (92 aa). Positions 220–242 are linker 12; it reads KSQSAGKVSVEMDAALGVDLTSI. The interval 243-381 is coil 2; that stretch reads LNNMRADYEI…QTYRRLLEGE (139 aa). Residues 382-429 are tail; it reads LGQVTTVANTSSVESKTESSSTSTTRTRMVKTIVEEVVDGKVVSSRVE. Positions 389-408 are disordered; the sequence is ANTSSVESKTESSSTSTTRT. Low complexity predominate over residues 391-408; sequence TSSVESKTESSSTSTTRT.

The protein belongs to the intermediate filament family. As to quaternary structure, heterotetramer of two type I and two type II keratins.

This chain is Keratin, type I cytoskeletal 47 kDa (xk81a1), found in Xenopus laevis (African clawed frog).